A 61-amino-acid chain; its full sequence is Potassium channel toxin alpha-KTx 18.1 (61 aa).

An N-terminal signal peptide occupies residues 1–24; the sequence is MRFTGIILILISMTLIDSFFEMKV. Intrachain disulfides connect Cys33/Cys52, Cys38/Cys57, and Cys42/Cys59.

As to expression, expressed by the venom gland.

The protein localises to the secreted. Reversible blocker of both Kv1.3/KCNA3 potassium channels (high affinity) and Shaker B (mammalian Kv1.1 analog) potassium channels (very low affinity). In Tityus obscurus (Amazonian scorpion), this protein is Potassium channel toxin alpha-KTx 18.1.